We begin with the raw amino-acid sequence, 97 residues long: Small ribosomal subunit protein uS19 (97 aa).

The protein belongs to the universal ribosomal protein uS19 family.

Protein S19 forms a complex with S13 that binds strongly to the 16S ribosomal RNA. This chain is Small ribosomal subunit protein uS19, found in Salinibacter ruber (strain DSM 13855 / M31).